The primary structure comprises 60 residues: UPF0337 protein SAV1625 (60 aa).

The tract at residues 18 to 41 (VGNVTDNKELEKEGQQDKATGKAK) is disordered. Residues 23 to 41 (DNKELEKEGQQDKATGKAK) are compositionally biased toward basic and acidic residues.

It belongs to the UPF0337 (CsbD) family.

This is UPF0337 protein SAV1625 from Staphylococcus aureus (strain Mu50 / ATCC 700699).